A 185-amino-acid polypeptide reads, in one-letter code: Peptidyl-tRNA hydrolase (185 aa).

Tyr14 is a tRNA binding site. The active-site Proton acceptor is the His19. 3 residues coordinate tRNA: Phe64, Asn66, and Asn112.

This sequence belongs to the PTH family. In terms of assembly, monomer.

The protein resides in the cytoplasm. The enzyme catalyses an N-acyl-L-alpha-aminoacyl-tRNA + H2O = an N-acyl-L-amino acid + a tRNA + H(+). Hydrolyzes ribosome-free peptidyl-tRNAs (with 1 or more amino acids incorporated), which drop off the ribosome during protein synthesis, or as a result of ribosome stalling. Functionally, catalyzes the release of premature peptidyl moieties from peptidyl-tRNA molecules trapped in stalled 50S ribosomal subunits, and thus maintains levels of free tRNAs and 50S ribosomes. The polypeptide is Peptidyl-tRNA hydrolase (Halalkalibacterium halodurans (strain ATCC BAA-125 / DSM 18197 / FERM 7344 / JCM 9153 / C-125) (Bacillus halodurans)).